A 125-amino-acid polypeptide reads, in one-letter code: Large ribosomal subunit protein bL12 (125 aa).

It belongs to the bacterial ribosomal protein bL12 family. Homodimer. Part of the ribosomal stalk of the 50S ribosomal subunit. Forms a multimeric L10(L12)X complex, where L10 forms an elongated spine to which 2 to 4 L12 dimers bind in a sequential fashion. Binds GTP-bound translation factors.

Its function is as follows. Forms part of the ribosomal stalk which helps the ribosome interact with GTP-bound translation factors. Is thus essential for accurate translation. This chain is Large ribosomal subunit protein bL12, found in Endomicrobium trichonymphae.